The primary structure comprises 108 residues: Structural protein 1 (108 aa).

The disordered stretch occupies residues 1–20 (MSRVSEYGVPEGVRESDSDT). Residues 1–77 (MSRVSEYGVP…LKMQMDRLCN (77 aa)) are Intravirion-facing. A helical; Signal-anchor for type II membrane protein membrane pass occupies residues 78 to 98 (VLGVVLQMATLALVTYIAFVV). Topologically, residues 99–108 (HTRATSCKRE) are virion surface.

This sequence belongs to the varicellovirus ORF1 protein family. As to quaternary structure, homodimer. Post-translationally, phosphorylated.

The protein localises to the virion membrane. It localises to the host Golgi apparatus membrane. The polypeptide is Structural protein 1 (Varicella-zoster virus (strain Dumas) (HHV-3)).